A 273-amino-acid polypeptide reads, in one-letter code: Secretory carrier-associated membrane protein 6 (273 aa).

The tract at residues Met1 to Glu69 is disordered. The Cytoplasmic segment spans residues Met1–Ala131. Positions Asn20–Ser30 are enriched in gly residues. Positions Arg68–Ala94 form a coiled coil. 4 consecutive transmembrane segments (helical) span residues Ser132–Ile152, Leu159–Tyr179, Phe194–Ala214, and Ile239–Ile259. The Cytoplasmic portion of the chain corresponds to Gly260–Lys273.

This sequence belongs to the SCAMP family.

The protein resides in the cell membrane. It localises to the cytoplasmic vesicle. The protein localises to the secretory vesicle membrane. In terms of biological role, probably involved in membrane trafficking. The polypeptide is Secretory carrier-associated membrane protein 6 (SCAMP6) (Oryza sativa subsp. japonica (Rice)).